The sequence spans 355 residues: Guanine nucleotide-binding protein G(i) subunit alpha-2 (355 aa).

Glycine 2 is lipidated: N-myristoyl glycine. Cysteine 3 carries S-palmitoyl cysteine lipidation. One can recognise a G-alpha domain in the interval 32 to 355 (REVKLLLLGA…KNNLKDCGLF (324 aa)). The G1 motif stretch occupies residues 35 to 48 (KLLLLGAGESGKST). GTP contacts are provided by residues 40 to 47 (GAGESGKS), 176 to 182 (LRTRVKT), 201 to 205 (DVGGQ), 270 to 273 (NKKD), and alanine 327. Mg(2+)-binding residues include serine 47 and threonine 182. Residues 174 to 182 (DVLRTRVKT) are G2 motif. A G3 motif region spans residues 197-206 (FKMFDVGGQR). Positions 266–273 (ILFLNKKD) are G4 motif. Residues 325-330 (TCATDT) are G5 motif.

It belongs to the G-alpha family. G(i/o/t/z) subfamily. In terms of assembly, g proteins are composed of 3 units; alpha, beta and gamma. The alpha chain contains the guanine nucleotide binding site. In this context, interacts with GNB2. Interacts with UNC5B. Interacts with GPSM1. Interacts with RGS12 and RGS14. Interacts (inactive GDP-bound form) with NUCB1 (via GBA motif); the interaction leads to activation of GNAI3. Interacts (inactive GDP-bound form) with CCDC88C/DAPLE (via GBA motif). Interacts (inactive GDP-bound form) with CCDC8A/GIV (via GBA motif). Interacts with CXCR1 and CXCR2.

The protein resides in the cytoplasm. It is found in the cytoskeleton. Its subcellular location is the microtubule organizing center. It localises to the centrosome. The protein localises to the cell membrane. The protein resides in the membrane. Its function is as follows. Guanine nucleotide-binding proteins (G proteins) are involved as modulators or transducers in various transmembrane signaling systems. The G(i) proteins are involved in hormonal regulation of adenylate cyclase: they inhibit the cyclase in response to beta-adrenergic stimuli. May play a role in cell division. This chain is Guanine nucleotide-binding protein G(i) subunit alpha-2 (GNAI2), found in Canis lupus familiaris (Dog).